The chain runs to 250 residues: NAD-dependent protein deacetylase 2 (250 aa).

Positions 4-250 (MDSKNLFKKA…LRNIWNLIKS (247 aa)) constitute a Deacetylase sirtuin-type domain. NAD(+) is bound by residues alanine 29, threonine 33, phenylalanine 40, arginine 41, glutamine 107, isoleucine 109, aspartate 110, and histidine 125. Residue phenylalanine 40 coordinates nicotinamide. Residues isoleucine 109 and aspartate 110 each contribute to the nicotinamide site. Residue histidine 125 is the Proton acceptor of the active site. 4 residues coordinate Zn(2+): cysteine 133, cysteine 136, cysteine 158, and cysteine 161. The NAD(+) site is built by serine 198, serine 199, and asparagine 219.

It belongs to the sirtuin family. Class U subfamily. The cofactor is Zn(2+).

It is found in the cytoplasm. The enzyme catalyses N(6)-acetyl-L-lysyl-[protein] + NAD(+) + H2O = 2''-O-acetyl-ADP-D-ribose + nicotinamide + L-lysyl-[protein]. Its function is as follows. NAD-dependent protein deacetylase which modulates the activities of several enzymes which are inactive in their acetylated form. The protein is NAD-dependent protein deacetylase 2 of Caldanaerobacter subterraneus subsp. tengcongensis (strain DSM 15242 / JCM 11007 / NBRC 100824 / MB4) (Thermoanaerobacter tengcongensis).